Consider the following 512-residue polypeptide: Histidine ammonia-lyase (512 aa).

The 5-imidazolinone (Ala-Gly) cross-link spans 141–143 (ASG). Residue S142 is modified to 2,3-didehydroalanine (Ser).

The protein belongs to the PAL/histidase family. Contains an active site 4-methylidene-imidazol-5-one (MIO), which is formed autocatalytically by cyclization and dehydration of residues Ala-Ser-Gly.

It localises to the cytoplasm. The catalysed reaction is L-histidine = trans-urocanate + NH4(+). It participates in amino-acid degradation; L-histidine degradation into L-glutamate; N-formimidoyl-L-glutamate from L-histidine: step 1/3. This chain is Histidine ammonia-lyase, found in Bacillus velezensis (strain DSM 23117 / BGSC 10A6 / LMG 26770 / FZB42) (Bacillus amyloliquefaciens subsp. plantarum).